Consider the following 339-residue polypeptide: Lipoate-protein ligase A (339 aa).

The 184-residue stretch at 28–211 (NPDSHTLFLW…AFREYYRDTD (184 aa)) folds into the BPL/LPL catalytic domain. Residues arginine 70, 75–78 (GAVF), and lysine 129 each bind ATP. Lysine 129 is a binding site for (R)-lipoate.

It belongs to the LplA family. In terms of assembly, monomer.

Its subcellular location is the cytoplasm. It catalyses the reaction L-lysyl-[lipoyl-carrier protein] + (R)-lipoate + ATP = N(6)-[(R)-lipoyl]-L-lysyl-[lipoyl-carrier protein] + AMP + diphosphate + H(+). The protein operates within protein modification; protein lipoylation via exogenous pathway; protein N(6)-(lipoyl)lysine from lipoate: step 1/2. It functions in the pathway protein modification; protein lipoylation via exogenous pathway; protein N(6)-(lipoyl)lysine from lipoate: step 2/2. Catalyzes both the ATP-dependent activation of exogenously supplied lipoate to lipoyl-AMP and the transfer of the activated lipoyl onto the lipoyl domains of lipoate-dependent enzymes. The protein is Lipoate-protein ligase A of Psychrobacter cryohalolentis (strain ATCC BAA-1226 / DSM 17306 / VKM B-2378 / K5).